The sequence spans 259 residues: Bis(5'-nucleosyl)-tetraphosphatase, symmetrical (259 aa).

Belongs to the Ap4A hydrolase family.

It carries out the reaction P(1),P(4)-bis(5'-adenosyl) tetraphosphate + H2O = 2 ADP + 2 H(+). Its function is as follows. Hydrolyzes diadenosine 5',5'''-P1,P4-tetraphosphate to yield ADP. The protein is Bis(5'-nucleosyl)-tetraphosphatase, symmetrical (apaH) of Klebsiella aerogenes (Enterobacter aerogenes).